Consider the following 78-residue polypeptide: DNA-directed RNA polymerase subunit Rpo5 (78 aa).

It belongs to the archaeal Rpo5/eukaryotic RPB5 RNA polymerase subunit family. Part of the RNA polymerase complex.

The protein resides in the cytoplasm. The catalysed reaction is RNA(n) + a ribonucleoside 5'-triphosphate = RNA(n+1) + diphosphate. DNA-dependent RNA polymerase (RNAP) catalyzes the transcription of DNA into RNA using the four ribonucleoside triphosphates as substrates. The protein is DNA-directed RNA polymerase subunit Rpo5 of Methanosarcina acetivorans (strain ATCC 35395 / DSM 2834 / JCM 12185 / C2A).